The sequence spans 74 residues: Cytochrome c oxidase subunit 3 (74 aa).

2 helical membrane-spanning segments follow: residues 15-37 and 42-59; these read SPWP…KWFH and SLFL…YQWW.

This sequence belongs to the cytochrome c oxidase subunit 3 family. In terms of assembly, component of the cytochrome c oxidase (complex IV, CIV), a multisubunit enzyme composed of a catalytic core of 3 subunits and several supernumerary subunits. The complex exists as a monomer or a dimer and forms supercomplexes (SCs) in the inner mitochondrial membrane with ubiquinol-cytochrome c oxidoreductase (cytochrome b-c1 complex, complex III, CIII).

The protein resides in the mitochondrion inner membrane. The enzyme catalyses 4 Fe(II)-[cytochrome c] + O2 + 8 H(+)(in) = 4 Fe(III)-[cytochrome c] + 2 H2O + 4 H(+)(out). Functionally, component of the cytochrome c oxidase, the last enzyme in the mitochondrial electron transport chain which drives oxidative phosphorylation. The respiratory chain contains 3 multisubunit complexes succinate dehydrogenase (complex II, CII), ubiquinol-cytochrome c oxidoreductase (cytochrome b-c1 complex, complex III, CIII) and cytochrome c oxidase (complex IV, CIV), that cooperate to transfer electrons derived from NADH and succinate to molecular oxygen, creating an electrochemical gradient over the inner membrane that drives transmembrane transport and the ATP synthase. Cytochrome c oxidase is the component of the respiratory chain that catalyzes the reduction of oxygen to water. Electrons originating from reduced cytochrome c in the intermembrane space (IMS) are transferred via the dinuclear copper A center (CU(A)) of subunit 2 and heme A of subunit 1 to the active site in subunit 1, a binuclear center (BNC) formed by heme A3 and copper B (CU(B)). The BNC reduces molecular oxygen to 2 water molecules using 4 electrons from cytochrome c in the IMS and 4 protons from the mitochondrial matrix. The polypeptide is Cytochrome c oxidase subunit 3 (mt:CoIII) (Drosophila simulans (Fruit fly)).